The chain runs to 862 residues: Pentatricopeptide repeat-containing protein At1g74850, chloroplastic (862 aa).

A chloroplast-targeting transit peptide spans 1–66 (MNLAIPNPNS…DLVLGNPSVS (66 aa)). PPR repeat units follow at residues 104-139 (SLND…WCKP), 140-174 (NEHI…GVSR), 175-209 (SVFS…KISP), 210-245 (SILT…GIQP), 246-280 (DIVT…GIVP), 281-315 (DLTT…GSLP), 316-350 (DITS…GCTP), 351-385 (NANT…NTDP), 386-420 (DAAT…NIEP), 421-455 (DMET…DIVP), 456-490 (SSKA…GSNP), 491-525 (SIET…GIPR), 526-560 (NRDT…RCDP), 561-595 (DERT…DILP), and 596-630 (SIMC…RVSN). Residues 713–801 (VDVHRMSEGG…RIMCQRSQLK (89 aa)) form the Smr domain. Positions 831 to 862 (GTRASTSSDTNHSGNPTQRRTRTKKELAGSTA) are disordered. The span at 833–848 (RASTSSDTNHSGNPTQ) shows a compositional bias: polar residues.

This sequence belongs to the PPR family. P subfamily. Mostly expressed in leaves, stems and flowers, but barely in roots.

The protein resides in the plastid. The protein localises to the chloroplast. Involved in plastid gene expression. This chain is Pentatricopeptide repeat-containing protein At1g74850, chloroplastic (PTAC2), found in Arabidopsis thaliana (Mouse-ear cress).